The sequence spans 515 residues: Bifunctional purine biosynthesis protein PurH (515 aa).

The 145-residue stretch at 1 to 145 folds into the MGS-like domain; that stretch reads MTKRALISVS…KNHASVTVVV (145 aa).

It belongs to the PurH family.

It catalyses the reaction (6R)-10-formyltetrahydrofolate + 5-amino-1-(5-phospho-beta-D-ribosyl)imidazole-4-carboxamide = 5-formamido-1-(5-phospho-D-ribosyl)imidazole-4-carboxamide + (6S)-5,6,7,8-tetrahydrofolate. It carries out the reaction IMP + H2O = 5-formamido-1-(5-phospho-D-ribosyl)imidazole-4-carboxamide. The protein operates within purine metabolism; IMP biosynthesis via de novo pathway; 5-formamido-1-(5-phospho-D-ribosyl)imidazole-4-carboxamide from 5-amino-1-(5-phospho-D-ribosyl)imidazole-4-carboxamide (10-formyl THF route): step 1/1. Its pathway is purine metabolism; IMP biosynthesis via de novo pathway; IMP from 5-formamido-1-(5-phospho-D-ribosyl)imidazole-4-carboxamide: step 1/1. The protein is Bifunctional purine biosynthesis protein PurH of Streptococcus pyogenes serotype M6 (strain ATCC BAA-946 / MGAS10394).